The sequence spans 127 residues: Small ribosomal subunit protein uS11 (127 aa).

It belongs to the universal ribosomal protein uS11 family. As to quaternary structure, part of the 30S ribosomal subunit.

Its function is as follows. Located on the platform of the 30S subunit. This Natronomonas pharaonis (strain ATCC 35678 / DSM 2160 / CIP 103997 / JCM 8858 / NBRC 14720 / NCIMB 2260 / Gabara) (Halobacterium pharaonis) protein is Small ribosomal subunit protein uS11.